The sequence spans 147 residues: Sec-independent protein translocase protein TatB (147 aa).

A helical membrane pass occupies residues 1–21; that stretch reads MFDFGFSELIVIAVVTLIVVG. The interval 117 to 147 is disordered; it reads APAPMSLAPHGDAASAGREPAAVPGSGPEKA.

This sequence belongs to the TatB family. In terms of assembly, the Tat system comprises two distinct complexes: a TatABC complex, containing multiple copies of TatA, TatB and TatC subunits, and a separate TatA complex, containing only TatA subunits. Substrates initially bind to the TatABC complex, which probably triggers association of the separate TatA complex to form the active translocon.

The protein localises to the cell inner membrane. Its function is as follows. Part of the twin-arginine translocation (Tat) system that transports large folded proteins containing a characteristic twin-arginine motif in their signal peptide across membranes. Together with TatC, TatB is part of a receptor directly interacting with Tat signal peptides. TatB may form an oligomeric binding site that transiently accommodates folded Tat precursor proteins before their translocation. In Aromatoleum aromaticum (strain DSM 19018 / LMG 30748 / EbN1) (Azoarcus sp. (strain EbN1)), this protein is Sec-independent protein translocase protein TatB.